Reading from the N-terminus, the 239-residue chain is Phosphoribosylaminoimidazole-succinocarboxamide synthase (239 aa).

The protein belongs to the SAICAR synthetase family.

It catalyses the reaction 5-amino-1-(5-phospho-D-ribosyl)imidazole-4-carboxylate + L-aspartate + ATP = (2S)-2-[5-amino-1-(5-phospho-beta-D-ribosyl)imidazole-4-carboxamido]succinate + ADP + phosphate + 2 H(+). It participates in purine metabolism; IMP biosynthesis via de novo pathway; 5-amino-1-(5-phospho-D-ribosyl)imidazole-4-carboxamide from 5-amino-1-(5-phospho-D-ribosyl)imidazole-4-carboxylate: step 1/2. The sequence is that of Phosphoribosylaminoimidazole-succinocarboxamide synthase from Bacillus cytotoxicus (strain DSM 22905 / CIP 110041 / 391-98 / NVH 391-98).